Here is a 458-residue protein sequence, read N- to C-terminus: MSVIFHENPGTSLGSVVPDTNTSFERESQLSVKTSPEWIDELFPNVSFIDSPTHQVIRGFCRDVFVYRLPGGFRVRYWDAVILVPNILFLLFLILKCGSVIRKLRTGNSPVLRAFTLLVYVSTLVNIIRCAYSMTLSMTDGLEQTVDQTLWIIIKFFYLTAEFCALTFGLLFGHLDNGKSILIALLGTLLVSIPHTAVQVIIEMKIIDNSWLPLTYFDIQSDGGFLFWVFSSAVLALVYFFIMCLPLVCCQKYTKLPSKGSFLIYCMMMVVLNVLQSMGAALILFKSSDGLCFVGVSTYVYFVLYPPIIYFTFLRKKLKTPPNNTSGLFMYRKHKDEQGSGDLPDSYYPRFSGLTSPSYDDLFDYDRDARFTHYDISRNEYVQNPHYNTYSTPLIMTSVETAESTVTTRTGSDDYAHHRDSMLSEPSTGTTTRHLKGLGPQGSLVFEDDPSSLTSLRM.

N-linked (GlcNAc...) asparagine glycosylation is found at Asn21 and Asn45. 7 consecutive transmembrane segments (helical) span residues 81–101 (VILVPNILFLLFLILKCGSVI), 114–134 (AFTLLVYVSTLVNIIRCAYSM), 152–172 (IIIKFFYLTAEFCALTFGLLF), 181–201 (ILIALLGTLLVSIPHTAVQVI), 225–245 (FLFWVFSSAVLALVYFFIMCL), 263–283 (LIYCMMMVVLNVLQSMGAALI), and 291–311 (LCFVGVSTYVYFVLYPPIIYF). Residues Asn323 and Asn324 are each glycosylated (N-linked (GlcNAc...) asparagine). The interval 409–458 (RTGSDDYAHHRDSMLSEPSTGTTTRHLKGLGPQGSLVFEDDPSSLTSLRM) is disordered. The segment covering 411 to 422 (GSDDYAHHRDSM) has biased composition (basic and acidic residues).

Belongs to the UPF0359 family.

It localises to the membrane. In Caenorhabditis elegans, this protein is Transmembrane protein adipocyte-associated 1 homolog (tpra-1).